The primary structure comprises 556 residues: 2-succinyl-5-enolpyruvyl-6-hydroxy-3-cyclohexene-1-carboxylate synthase (556 aa).

The protein belongs to the TPP enzyme family. MenD subfamily. As to quaternary structure, homodimer. It depends on Mg(2+) as a cofactor. Mn(2+) serves as cofactor. Requires thiamine diphosphate as cofactor.

The enzyme catalyses isochorismate + 2-oxoglutarate + H(+) = 5-enolpyruvoyl-6-hydroxy-2-succinyl-cyclohex-3-ene-1-carboxylate + CO2. The protein operates within quinol/quinone metabolism; 1,4-dihydroxy-2-naphthoate biosynthesis; 1,4-dihydroxy-2-naphthoate from chorismate: step 2/7. Its pathway is quinol/quinone metabolism; menaquinone biosynthesis. Its function is as follows. Catalyzes the thiamine diphosphate-dependent decarboxylation of 2-oxoglutarate and the subsequent addition of the resulting succinic semialdehyde-thiamine pyrophosphate anion to isochorismate to yield 2-succinyl-5-enolpyruvyl-6-hydroxy-3-cyclohexene-1-carboxylate (SEPHCHC). This is 2-succinyl-5-enolpyruvyl-6-hydroxy-3-cyclohexene-1-carboxylate synthase from Escherichia coli (strain UTI89 / UPEC).